Reading from the N-terminus, the 724-residue chain is MPRNSGAGYGCPHGDPSMLDSRETPQESRQDMIVRTTQEKLKTSSLTDRQPLSKESLNHALELSVPEKVNNAQWDAPEEALWTTRADGRVRLRIDPSCPQLPYTVHRMFYEALDKYGDLIALGFKRQDKWEHISYSQYYLLARRAAKGFLKLGLKQAHSVAILGFNSPEWFFSAVGTVFAGGIVTGIYTTSSPEACQYIAYDCCANVIMVDTQKQLEKILKIWKQLPHLKAVVIYKEPPPNKMANVYTMEEFMELGNEVPEEALDAIIDTQQPNQCCVLVYTSGTTGNPKGVMLSQDNITWTARYGSQAGDIRPAEVQQEVVVSYLPLSHIAAQIYDLWTGIQWGAQVCFAEPDALKGSLVNTLREVEPTSHMGVPRVWEKIMERIQEVAAQSGFIRRKMLLWAMSVTLEQNLTCPGSDLKPFTTRLADYLVLAKVRQALGFAKCQKNFYGAAPMMAETQHFFLGLNIRLYAGYGLSETSGPHFMSSPYNYRLYSSGKLVPGCRVKLVNQDAEGIGEICLWGRTIFMGYLNMEDKTCEAIDEEGWLHTGDAGRLDADGFLYITGRLKELIITAGGENVPPVPIEEAVKMELPIISNAMLIGDQRKFLSMLLTLKCTLDPDTSDQTDNLTEQAMEFCQRVGSRATTVSEIIEKKDEAVYQAIEEGIRRVNMNAAARPYHIQKWAILERDFSISGGELGPTMKLKRLTVLEKYKGIIDSFYQEQKM.

Residues 1-30 form a disordered region; sequence MPRNSGAGYGCPHGDPSMLDSRETPQESRQ. The span at 20 to 30 shows a compositional bias: basic and acidic residues; sequence DSRETPQESRQ. Residues S53 and S56 each carry the phosphoserine modification. Residues 282-290, 472-477, D550, and R565 each bind ATP; these read TSGTTGNPK and AGYGLS. Position 658 is a phosphotyrosine (Y658). K701 provides a ligand contact to ATP.

This sequence belongs to the ATP-dependent AMP-binding enzyme family. Bubblegum subfamily. In terms of tissue distribution, expressed primarily in brain. Expressed at lower level in testis and adrenal gland. Present in all regions of brain except pituitary.

It is found in the cytoplasm. The protein resides in the cytoplasmic vesicle. Its subcellular location is the microsome. It localises to the endoplasmic reticulum. The protein localises to the cell membrane. It catalyses the reaction a long-chain fatty acid + ATP + CoA = a long-chain fatty acyl-CoA + AMP + diphosphate. The catalysed reaction is (E)-hexadec-2-enoate + ATP + CoA = (2E)-hexadecenoyl-CoA + AMP + diphosphate. The enzyme catalyses hexadecanoate + ATP + CoA = hexadecanoyl-CoA + AMP + diphosphate. Its function is as follows. Catalyzes the conversion of fatty acids such as long-chain and very long-chain fatty acids to their active form acyl-CoAs for both synthesis of cellular lipids, and degradation via beta-oxidation. Can activate diverse saturated, monosaturated and polyunsaturated fatty acids. The chain is Long-chain-fatty-acid--CoA ligase ACSBG1 from Homo sapiens (Human).